The primary structure comprises 571 residues: MRTSQYLFSTLKETPNDAQVVSHQLMLRAGMIRSMASGLYNWLPTGVKVLKKVENIIREEMNKGGAIEVLMPVVQSAELWQESGRWEQYGPELLRFSDRGNRDFVLGPTHEEVITDLVRREVSSYKQLPLNLYQIQTKFRDEVRPRFGVMRSREFVMKDAYSFHTTQESLQQTYEVMYQVYTNIFTRLGLDFRAVQADTGSIGGSASHEFQVLASSGEDDVVFSTESDFAANIELAEAIAVGERQAPGKAMELVDTPNAKTIAELVEQFNLPIEKTVKTLIVKGATEDAPLVALIIRGDHELNEIKAQKHPLVADPLEFADETEIKAKIGAGVGSLGPVNLNIPAIIDRSVALMSDFGAGANIDGKHYFNINWERDAAMPEAFDLRNVAEGDPSPDGKGTLQIKRGIEVGHIFQLGKKYSEAMNATVQGEDGKPLVMTMGCYGIGVTRVVAAAIEQHHDERGIIWPTDEIAPFTVAIVPMNMHKSESVRAFAEELYQTLKAQGVDVIFDDRKERPGVMFADMELIGVPHMVVIGEKNLDKGEIEYKNRRNGEKQMIAKDRLLAFLAENVKA.

It belongs to the class-II aminoacyl-tRNA synthetase family. ProS type 1 subfamily. In terms of assembly, homodimer.

It is found in the cytoplasm. It catalyses the reaction tRNA(Pro) + L-proline + ATP = L-prolyl-tRNA(Pro) + AMP + diphosphate. Its function is as follows. Catalyzes the attachment of proline to tRNA(Pro) in a two-step reaction: proline is first activated by ATP to form Pro-AMP and then transferred to the acceptor end of tRNA(Pro). As ProRS can inadvertently accommodate and process non-cognate amino acids such as alanine and cysteine, to avoid such errors it has two additional distinct editing activities against alanine. One activity is designated as 'pretransfer' editing and involves the tRNA(Pro)-independent hydrolysis of activated Ala-AMP. The other activity is designated 'posttransfer' editing and involves deacylation of mischarged Ala-tRNA(Pro). The misacylated Cys-tRNA(Pro) is not edited by ProRS. The polypeptide is Proline--tRNA ligase (Actinobacillus succinogenes (strain ATCC 55618 / DSM 22257 / CCUG 43843 / 130Z)).